The primary structure comprises 336 residues: Aspartate--ammonia ligase (336 aa).

The protein belongs to the class-II aminoacyl-tRNA synthetase family. AsnA subfamily.

The protein localises to the cytoplasm. It catalyses the reaction L-aspartate + NH4(+) + ATP = L-asparagine + AMP + diphosphate + H(+). It functions in the pathway amino-acid biosynthesis; L-asparagine biosynthesis; L-asparagine from L-aspartate (ammonia route): step 1/1. This chain is Aspartate--ammonia ligase, found in Clostridium perfringens (strain ATCC 13124 / DSM 756 / JCM 1290 / NCIMB 6125 / NCTC 8237 / Type A).